A 180-amino-acid polypeptide reads, in one-letter code: Large ribosomal subunit protein uL6 (180 aa).

It belongs to the universal ribosomal protein uL6 family. As to quaternary structure, part of the 50S ribosomal subunit.

In terms of biological role, this protein binds to the 23S rRNA, and is important in its secondary structure. It is located near the subunit interface in the base of the L7/L12 stalk, and near the tRNA binding site of the peptidyltransferase center. The protein is Large ribosomal subunit protein uL6 of Borrelia duttonii (strain Ly).